Consider the following 410-residue polypeptide: Zinc finger TRAF-type-containing protein 1 (410 aa).

A compositionally biased stretch (gly residues) spans 1–13 (MSGAEEAGGGGPA). Residues 1–22 (MSGAEEAGGGGPAAGPAGSVPA) are disordered. The RING-type; degenerate zinc-finger motif lies at 117–162 (CTVCLDLPKASVYQCTNGHLMCAGCFIHLLADARLKEEQATCPNCR). The TRAF-type zinc finger occupies 158–231 (CPNCRCEISK…PWHGPFHELT (74 aa)).

It belongs to the ZFTRAF1 family. In terms of assembly, interacts with LGALS3.

The protein localises to the cytoplasm. It localises to the perinuclear region. In Bos taurus (Bovine), this protein is Zinc finger TRAF-type-containing protein 1.